A 261-amino-acid polypeptide reads, in one-letter code: Indole-3-glycerol phosphate synthase (261 aa).

Belongs to the TrpC family.

It catalyses the reaction 1-(2-carboxyphenylamino)-1-deoxy-D-ribulose 5-phosphate + H(+) = (1S,2R)-1-C-(indol-3-yl)glycerol 3-phosphate + CO2 + H2O. It participates in amino-acid biosynthesis; L-tryptophan biosynthesis; L-tryptophan from chorismate: step 4/5. In Burkholderia pseudomallei (strain 1106a), this protein is Indole-3-glycerol phosphate synthase.